The sequence spans 527 residues: Butyrophilin subfamily 2 member A1 (527 aa).

Residues 1–28 (MESAAALHFSRPASLLLLLLSLCALVSA) form the signal peptide. One can recognise an Ig-like V-type domain in the interval 29 to 141 (QFIVVGPTDP…SYDEAILHLV (113 aa)). The Extracellular portion of the chain corresponds to 29-248 (QFIVVGPTDP…SFMPSVSPCA (220 aa)). Residues N46, N114, and N120 are each glycosylated (N-linked (GlcNAc...) asparagine). A disulfide bond links C51 and C125. A helical transmembrane segment spans residues 249–269 (VALPIIVVILMIPIAVCIYWI). Residues 270-527 (NKLQKEKKIL…LHRVGTHQSL (258 aa)) lie on the Cytoplasmic side of the membrane. The B30.2/SPRY domain maps to 310–506 (VKEKLQEELR…IFICPALTGA (197 aa)).

Belongs to the immunoglobulin superfamily. BTN/MOG family. In terms of tissue distribution, highly expressed in brain, bone marrow, small intestine, muscle, spleen and pancreas. Moderate expression was seen in lung, liver and kidney.

The protein localises to the membrane. This Homo sapiens (Human) protein is Butyrophilin subfamily 2 member A1 (BTN2A1).